Here is a 344-residue protein sequence, read N- to C-terminus: Putative 2-hydroxyacid dehydrogenase YoaD (344 aa).

An NAD(+)-binding site is contributed by Asp-193. Arg-251 is a catalytic residue. Asp-275 serves as a coordination point for NAD(+). Glu-280 is a catalytic residue. His-300 (proton donor) is an active-site residue.

This sequence belongs to the D-isomer specific 2-hydroxyacid dehydrogenase family.

The chain is Putative 2-hydroxyacid dehydrogenase YoaD (yoaD) from Bacillus subtilis (strain 168).